Reading from the N-terminus, the 479-residue chain is Type I inositol polyphosphate 5-phosphatase 8 (479 aa).

Catalytic regions lie at residues 300-315 (DKVIWLGDLNYRLRAS) and 379-394 (KRRTPAWCDRILWKGD).

It belongs to the inositol polyphosphate 5-phosphatase family.

This chain is Type I inositol polyphosphate 5-phosphatase 8, found in Arabidopsis thaliana (Mouse-ear cress).